We begin with the raw amino-acid sequence, 949 residues long: Isoleucine--tRNA ligase (949 aa).

Positions 58-68 (PYANGDIHIGH) match the 'HIGH' region motif. Glu-567 serves as a coordination point for L-isoleucyl-5'-AMP. The short motif at 608–612 (KMSKS) is the 'KMSKS' region element. Residue Lys-611 participates in ATP binding. 4 residues coordinate Zn(2+): Cys-912, Cys-915, Cys-932, and Cys-935.

This sequence belongs to the class-I aminoacyl-tRNA synthetase family. IleS type 1 subfamily. As to quaternary structure, monomer. Zn(2+) serves as cofactor.

Its subcellular location is the cytoplasm. It carries out the reaction tRNA(Ile) + L-isoleucine + ATP = L-isoleucyl-tRNA(Ile) + AMP + diphosphate. Its function is as follows. Catalyzes the attachment of isoleucine to tRNA(Ile). As IleRS can inadvertently accommodate and process structurally similar amino acids such as valine, to avoid such errors it has two additional distinct tRNA(Ile)-dependent editing activities. One activity is designated as 'pretransfer' editing and involves the hydrolysis of activated Val-AMP. The other activity is designated 'posttransfer' editing and involves deacylation of mischarged Val-tRNA(Ile). The protein is Isoleucine--tRNA ligase of Vibrio cholerae serotype O1 (strain ATCC 39315 / El Tor Inaba N16961).